Consider the following 379-residue polypeptide: Chaperone protein DnaJ (379 aa).

Residues Cys7–Gly72 form the J domain. A CR-type zinc finger spans residues Gly135 to Glu213. Cys148, Cys151, Cys165, Cys168, Cys187, Cys190, Cys201, and Cys204 together coordinate Zn(2+). CXXCXGXG motif repeat units follow at residues Cys148–Gly155, Cys165–Gly172, Cys187–Gly194, and Cys201–Gly208.

The protein belongs to the DnaJ family. Homodimer. It depends on Zn(2+) as a cofactor.

Its subcellular location is the cytoplasm. Participates actively in the response to hyperosmotic and heat shock by preventing the aggregation of stress-denatured proteins and by disaggregating proteins, also in an autonomous, DnaK-independent fashion. Unfolded proteins bind initially to DnaJ; upon interaction with the DnaJ-bound protein, DnaK hydrolyzes its bound ATP, resulting in the formation of a stable complex. GrpE releases ADP from DnaK; ATP binding to DnaK triggers the release of the substrate protein, thus completing the reaction cycle. Several rounds of ATP-dependent interactions between DnaJ, DnaK and GrpE are required for fully efficient folding. Also involved, together with DnaK and GrpE, in the DNA replication of plasmids through activation of initiation proteins. This is Chaperone protein DnaJ from Rhodopseudomonas palustris (strain BisB18).